The chain runs to 145 residues: Anaerobic nitrite reductase NSHB5 (145 aa).

The region spanning 2 to 142 (GFSETQEELV…LAAAIKEEMK (141 aa)) is the Globin domain. The Homodimerization signature appears at 35-39 (EIAPA). The heme b site is built by Ser-45, His-59, Lys-61, Arg-84, Thr-88, and His-89. The Homodimerization signature appears at 96–108 (DAYFEVVKTALLD).

The protein belongs to the plant globin family. Homodimer. Heme b serves as cofactor. As to expression, expressed in embryonic (embryos, coleoptiles and seminal roots) and vegetative (leaves and roots) organs.

The protein localises to the cytoplasm. It localises to the nucleus. It catalyses the reaction Fe(III)-heme b-[protein] + nitric oxide + H2O = Fe(II)-heme b-[protein] + nitrite + 2 H(+). Phytoglobin that reduces nitrite to nitric oxide under anoxic conditions (e.g. during flooding or in waterlogged soil). May not function as an oxygen storage or transport protein. Has an unusually high affinity for O(2) through an hexacoordinate heme iron because of a very low dissociation constant. This Oryza sativa subsp. japonica (Rice) protein is Anaerobic nitrite reductase NSHB5.